We begin with the raw amino-acid sequence, 381 residues long: Dual specificity protein phosphatase 6 (381 aa).

The Rhodanese domain maps to 30–148; that stretch reads GNERLLLMDC…FQAEFALHCE (119 aa). The disordered stretch occupies residues 176–203; it reads SSSDIESDLDRDPNSATDSDGSPLSNSQ. The segment covering 189-203 has biased composition (polar residues); it reads NSATDSDGSPLSNSQ. Residues 206-349 form the Tyrosine-protein phosphatase domain; sequence FPVEILPFLY…LLDFERTLGL (144 aa). The active-site Phosphocysteine intermediate is C293.

It belongs to the protein-tyrosine phosphatase family. Non-receptor class dual specificity subfamily. As to quaternary structure, interacts with MAPK1/ERK2. Post-translationally, ubiquitinated by the SCF(FBXO31) complex, leading to its proteasomal degradation.

Its subcellular location is the cytoplasm. The enzyme catalyses O-phospho-L-tyrosyl-[protein] + H2O = L-tyrosyl-[protein] + phosphate. It carries out the reaction O-phospho-L-seryl-[protein] + H2O = L-seryl-[protein] + phosphate. It catalyses the reaction O-phospho-L-threonyl-[protein] + H2O = L-threonyl-[protein] + phosphate. Its function is as follows. Dual specificity protein phosphatase, which mediates dephosphorylation and inactivation of MAP kinases. Has a specificity for the ERK family. Plays an important role in alleviating acute postoperative pain. Necessary for the normal dephosphorylation of the long-lasting phosphorylated forms of spinal MAPK1/3 and MAP kinase p38 induced by peripheral surgery, which drives the resolution of acute postoperative allodynia. Also important for dephosphorylation of MAPK1/3 in local wound tissue, which further contributes to resolution of acute pain. The protein is Dual specificity protein phosphatase 6 (Dusp6) of Mus musculus (Mouse).